A 369-amino-acid chain; its full sequence is 3-dehydroquinate synthase (369 aa).

NAD(+) is bound by residues aspartate 75–lysine 80, glycine 109–aspartate 113, threonine 133–threonine 134, lysine 146, lysine 155, and threonine 173–threonine 176. The Zn(2+) site is built by glutamate 188, histidine 251, and histidine 268.

The protein belongs to the sugar phosphate cyclases superfamily. Dehydroquinate synthase family. It depends on Co(2+) as a cofactor. The cofactor is Zn(2+). NAD(+) serves as cofactor.

Its subcellular location is the cytoplasm. The catalysed reaction is 7-phospho-2-dehydro-3-deoxy-D-arabino-heptonate = 3-dehydroquinate + phosphate. The protein operates within metabolic intermediate biosynthesis; chorismate biosynthesis; chorismate from D-erythrose 4-phosphate and phosphoenolpyruvate: step 2/7. Functionally, catalyzes the conversion of 3-deoxy-D-arabino-heptulosonate 7-phosphate (DAHP) to dehydroquinate (DHQ). In Legionella pneumophila (strain Corby), this protein is 3-dehydroquinate synthase.